The sequence spans 295 residues: uncharacterized protein (295 aa).

Residues 1-19 form the signal peptide; the sequence is MFRKFLFIPLLIVTSLVKA. Positions 274-295 are disordered; sequence KRNNPPLKNNNAKSKNSYETHK. The segment covering 276-288 has biased composition (low complexity); it reads NNPPLKNNNAKSK.

This is an uncharacterized protein from Rickettsia typhi (strain ATCC VR-144 / Wilmington).